The chain runs to 619 residues: 1-deoxy-D-xylulose-5-phosphate synthase (619 aa).

Residues histidine 76 and 117-119 (AHS) contribute to the thiamine diphosphate site. Aspartate 148 is a binding site for Mg(2+). Thiamine diphosphate is bound by residues 149-150 (GA), asparagine 177, tyrosine 284, and glutamate 366. Asparagine 177 serves as a coordination point for Mg(2+).

This sequence belongs to the transketolase family. DXPS subfamily. Homodimer. Mg(2+) serves as cofactor. It depends on thiamine diphosphate as a cofactor.

The enzyme catalyses D-glyceraldehyde 3-phosphate + pyruvate + H(+) = 1-deoxy-D-xylulose 5-phosphate + CO2. It functions in the pathway metabolic intermediate biosynthesis; 1-deoxy-D-xylulose 5-phosphate biosynthesis; 1-deoxy-D-xylulose 5-phosphate from D-glyceraldehyde 3-phosphate and pyruvate: step 1/1. Functionally, catalyzes the acyloin condensation reaction between C atoms 2 and 3 of pyruvate and glyceraldehyde 3-phosphate to yield 1-deoxy-D-xylulose-5-phosphate (DXP). This Azoarcus sp. (strain BH72) protein is 1-deoxy-D-xylulose-5-phosphate synthase.